We begin with the raw amino-acid sequence, 171 residues long: S-ribosylhomocysteine lyase (171 aa).

Fe cation-binding residues include H54, H58, and C128.

It belongs to the LuxS family. Homodimer. It depends on Fe cation as a cofactor.

The catalysed reaction is S-(5-deoxy-D-ribos-5-yl)-L-homocysteine = (S)-4,5-dihydroxypentane-2,3-dione + L-homocysteine. Its function is as follows. Involved in the synthesis of autoinducer 2 (AI-2) which is secreted by bacteria and is used to communicate both the cell density and the metabolic potential of the environment. The regulation of gene expression in response to changes in cell density is called quorum sensing. Catalyzes the transformation of S-ribosylhomocysteine (RHC) to homocysteine (HC) and 4,5-dihydroxy-2,3-pentadione (DPD). In Proteus mirabilis (strain HI4320), this protein is S-ribosylhomocysteine lyase.